Reading from the N-terminus, the 648-residue chain is Threonine--tRNA ligase (648 aa).

Residues 1-61 form the TGS domain; it reads MIKITFPNTS…NENASVKLYK (61 aa). The segment at 243–542 is catalytic; the sequence is DHRRIGKEME…MIEHTGGKFP (300 aa). Zn(2+) contacts are provided by Cys-338, His-389, and His-519.

It belongs to the class-II aminoacyl-tRNA synthetase family. Homodimer. Requires Zn(2+) as cofactor.

The protein resides in the cytoplasm. It carries out the reaction tRNA(Thr) + L-threonine + ATP = L-threonyl-tRNA(Thr) + AMP + diphosphate + H(+). In terms of biological role, catalyzes the attachment of threonine to tRNA(Thr) in a two-step reaction: L-threonine is first activated by ATP to form Thr-AMP and then transferred to the acceptor end of tRNA(Thr). Also edits incorrectly charged L-seryl-tRNA(Thr). This Azobacteroides pseudotrichonymphae genomovar. CFP2 protein is Threonine--tRNA ligase.